The sequence spans 298 residues: Transcription factor RAX2 (298 aa).

HTH myb-type domains follow at residues 9-62 and 63-117; these read KANV…LNYL and RPNI…KKKL. 2 DNA-binding regions (H-T-H motif) span residues 38–62 and 90–113; these read WIALPHKAGLRRCGKSCRLRWLNYL and WSVIAAHLQGRTDNDIKNYWNTKL.

In terms of tissue distribution, ubiquitous, with higher levels in roots, flowers, and shoot tips. Found in all cells of the shoot tips.

It is found in the nucleus. Functionally, transcription activator. Positively regulates axillary meristems (AMs) formation and development, especially during inflorescence. This chain is Transcription factor RAX2 (RAX2), found in Arabidopsis thaliana (Mouse-ear cress).